A 344-amino-acid polypeptide reads, in one-letter code: rRNA 2'-O-methyltransferase fibrillarin (344 aa).

The interval 1 to 113 (MGKPGFSPRG…GFKGGKTVTI (113 aa)) is disordered. Positions 8–107 (PRGGGGGGGG…RGGGAGGFKG (100 aa)) are enriched in gly residues. Asymmetric dimethylarginine occurs at positions 9, 23, 25, 40, 42, 48, 51, 58, 63, 71, 77, 83, 88, 93, and 98. S-adenosyl-L-methionine contacts are provided by residues 197 to 198 (TT), 216 to 217 (EF), 241 to 242 (DA), and 261 to 264 (DVAQ).

It belongs to the methyltransferase superfamily. Fibrillarin family. In terms of assembly, component of box C/D small nucleolar ribonucleoprotein (snoRNP) particles. It is associated with the U3, U8 and U13 small nuclear RNAs. Post-translationally, by homology to other fibrillarins, some or all of the N-terminal domain arginines are modified to asymmetric dimethylarginine (DMA).

It is found in the nucleus. It localises to the nucleolus. It catalyses the reaction L-glutaminyl-[histone H2A] + S-adenosyl-L-methionine = N(5)-methyl-L-glutaminyl-[histone H2A] + S-adenosyl-L-homocysteine + H(+). S-adenosyl-L-methionine-dependent methyltransferase that has the ability to methylate both RNAs and proteins. Involved in pre-rRNA processing. Utilizes the methyl donor S-adenosyl-L-methionine to catalyze the site-specific 2'-hydroxyl methylation of ribose moieties in pre-ribosomal RNA. Site specificity is provided by a guide RNA that base pairs with the substrate. Methylation occurs at a characteristic distance from the sequence involved in base pairing with the guide RNA. Also acts as a protein methyltransferase by mediating methylation of 'Gln-105' of histone H2A (H2AQ105me), a modification that impairs binding of the FACT complex and is specifically present at 35S ribosomal DNA locus. In Drosophila melanogaster (Fruit fly), this protein is rRNA 2'-O-methyltransferase fibrillarin.